The chain runs to 676 residues: Electrogenic aspartate/glutamate antiporter SLC25A13, mitochondrial (676 aa).

Ala2 carries the post-translational modification N-acetylalanine. The tract at residues Ala2 to Pro295 is regulatory N-terminal domain. Residues Ala2–Arg332 lie on the Mitochondrial intermembrane side of the membrane. Lys18 is modified (N6-acetyllysine). 4 EF-hand domains span residues Ser51 to Cys86, Ala87 to His122, Gln123 to Glu157, and Ile158 to His193. Residues Asp66, Thr68, Asp70, Leu72, and Glu77 each coordinate Ca(2+). Positions Leu296–Gln311 are linker loop domain. Residues Phe322 to Gly613 form a carrier domain region. Solcar repeat units follow at residues Ala327–Lys419, Val427–Ser511, and Val519–Trp607. Residues Phe333–Ile350 traverse the membrane as a helical segment. At Asp351–Arg393 the chain is on the mitochondrial matrix side. Lys354 and Lys373 each carry N6-acetyllysine. The helical transmembrane segment at Gly394–Asn413 threads the bilayer. The Mitochondrial intermembrane segment spans residues Asp414–Gly436. A helical transmembrane segment spans residues Gly437–Leu450. The Mitochondrial matrix portion of the chain corresponds to Glu451–Lys485. N6-methyllysine is present on Lys454. N6-acetyllysine; alternate is present on Lys485. The residue at position 485 (Lys485) is an N6-succinyllysine; alternate. Residues Gly486–Tyr505 form a helical membrane-spanning segment. Residues Ala506–Leu524 are Mitochondrial intermembrane-facing. The helical transmembrane segment at Leu525–Ala542 threads the bilayer. The Mitochondrial matrix segment spans residues Asp543–Lys581. Residue Lys581 is modified to N6-succinyllysine. Residues Gly582–Tyr601 form a helical membrane-spanning segment. Residues Glu602–Ser676 lie on the Mitochondrial intermembrane side of the membrane. The segment at Gly614–Ser676 is C-terminal domain. Lys663 is modified (N6-acetyllysine). Ser667 carries the post-translational modification Phosphoserine.

It belongs to the mitochondrial carrier (TC 2.A.29) family. In terms of assembly, homodimer (via N-terminus). As to expression, at 10.5 dpc, expressed in branchial arches, a well as in the limb and tail buds. At 13.5 dpc expression is predominant in epithelial structures and the forebrain, kidney and liver. Expression in liver is maintained into adulthood.

It is found in the mitochondrion inner membrane. It carries out the reaction L-aspartate(in) + L-glutamate(out) + H(+)(out) = L-aspartate(out) + L-glutamate(in) + H(+)(in). The enzyme catalyses 3-sulfino-L-alanine(out) + L-glutamate(in) + H(+)(in) = 3-sulfino-L-alanine(in) + L-glutamate(out) + H(+)(out). The catalysed reaction is 3-sulfino-L-alanine(out) + L-aspartate(in) = 3-sulfino-L-alanine(in) + L-aspartate(out). Its function is as follows. Mitochondrial electrogenic aspartate/glutamate antiporter that favors efflux of aspartate and entry of glutamate and proton within the mitochondria as part of the malate-aspartate shuttle. Also mediates the uptake of L-cysteinesulfinate (3-sulfino-L-alanine) by mitochondria in exchange of L-glutamate and proton. Can also exchange L-cysteinesulfinate with aspartate in their anionic form without any proton translocation. Lacks transport activity towards gamma-aminobutyric acid (GABA). This chain is Electrogenic aspartate/glutamate antiporter SLC25A13, mitochondrial, found in Mus musculus (Mouse).